A 124-amino-acid polypeptide reads, in one-letter code: Chemotaxis protein CheY1 (124 aa).

One can recognise a Response regulatory domain in the interval 2–120 (KLLVVDDSST…VLKEKLEVVL (119 aa)). Mg(2+)-binding residues include Asp-7, Asp-8, Asp-53, and Asn-55. Asp-53 is subject to 4-aspartylphosphate.

Interacts (when phosphorylated) with FliM. Mg(2+) serves as cofactor. In terms of processing, phosphorylated by CheAY. Dephosphorylated (inactivated) by CheZ.

Its subcellular location is the cytoplasm. Its function is as follows. Chemotactic response regulator protein that modulates the rotation direction of bacterial flagellar motors. Plays an important role in the colonization and infection of Helicobacter pylori. Upon phosphorylation by CheA, interacts with the flagellar motor protein FliM to cause clockwise flagellar rotation and bacterial reversals, as opposed to straight swimming when CheY1 is not phosphorylated. The polypeptide is Chemotaxis protein CheY1 (Helicobacter pylori (strain ATCC 700392 / 26695) (Campylobacter pylori)).